The chain runs to 371 residues: Putative glutamate--cysteine ligase 2 (371 aa).

This sequence belongs to the glutamate--cysteine ligase type 2 family. YbdK subfamily. As to quaternary structure, homodimer.

It carries out the reaction L-cysteine + L-glutamate + ATP = gamma-L-glutamyl-L-cysteine + ADP + phosphate + H(+). ATP-dependent carboxylate-amine ligase which exhibits weak glutamate--cysteine ligase activity. This chain is Putative glutamate--cysteine ligase 2, found in Klebsiella pneumoniae (strain 342).